The chain runs to 65 residues: LTCLICPEKYCNKVHTCRNGEKICFKKFDQRKLLGKRYIRGCAATCPEAKPREIVECCSTDKCNH.

5 disulfides stabilise this stretch: cysteine 3/cysteine 24, cysteine 6/cysteine 11, cysteine 17/cysteine 42, cysteine 46/cysteine 57, and cysteine 58/cysteine 63.

Belongs to the three-finger toxin family. Ancestral subfamily. Orphan group II sub-subfamily. Expressed by the venom gland.

The protein resides in the secreted. Its function is as follows. Binds to muscle and neuronal nicotinic acetylcholine receptors (nAChR). It binds to extracellular domain of rat alpha-7/CHRNA7 nAChR (IC(50)=2.2 uM) and to Torpedo californica membranes (IC(50)=30 uM). The sequence is that of Oxiana weak toxin from Naja oxiana (Central Asian cobra).